Reading from the N-terminus, the 550-residue chain is Pectinesterase 2.1 (550 aa).

N-linked (GlcNAc...) asparagine glycosylation occurs at Asn-179. Residues Thr-312 and Gln-342 each contribute to the substrate site. Cysteines 331 and 358 form a disulfide. Residue Asp-365 is the Proton donor of the active site. Catalysis depends on Asp-386, which acts as the Nucleophile. The cysteines at positions 399 and 433 are disulfide-linked. Positions 454 and 456 each coordinate substrate.

It in the N-terminal section; belongs to the PMEI family. The protein in the C-terminal section; belongs to the pectinesterase family.

The protein localises to the secreted. It is found in the cell wall. The enzyme catalyses [(1-&gt;4)-alpha-D-galacturonosyl methyl ester](n) + n H2O = [(1-&gt;4)-alpha-D-galacturonosyl](n) + n methanol + n H(+). The protein operates within glycan metabolism; pectin degradation; 2-dehydro-3-deoxy-D-gluconate from pectin: step 1/5. In terms of biological role, pectinesterase may play a role in cell wall metabolism during fruit growth and development prior to ripening and may be required for preparing cell walls for softening by polygalacturonase during fruit ripening. The sequence is that of Pectinesterase 2.1 (PME2.1) from Solanum lycopersicum (Tomato).